A 279-amino-acid polypeptide reads, in one-letter code: Pantothenate synthetase (279 aa).

An ATP-binding site is contributed by 26–33 (MGNLHEGH). Residue H33 is the Proton donor of the active site. Q57 serves as a coordination point for (R)-pantoate. Q57 provides a ligand contact to beta-alanine. 144 to 147 (GKKD) serves as a coordination point for ATP. Q150 is a (R)-pantoate binding site. Residues V173 and 181–184 (LSSR) each bind ATP.

Belongs to the pantothenate synthetase family. In terms of assembly, homodimer.

Its subcellular location is the cytoplasm. The catalysed reaction is (R)-pantoate + beta-alanine + ATP = (R)-pantothenate + AMP + diphosphate + H(+). Its pathway is cofactor biosynthesis; (R)-pantothenate biosynthesis; (R)-pantothenate from (R)-pantoate and beta-alanine: step 1/1. Catalyzes the condensation of pantoate with beta-alanine in an ATP-dependent reaction via a pantoyl-adenylate intermediate. The protein is Pantothenate synthetase of Burkholderia thailandensis (strain ATCC 700388 / DSM 13276 / CCUG 48851 / CIP 106301 / E264).